The sequence spans 250 residues: MLLRTAAASSLSLFNPNAEPSRSVPVLANNASRLVVRAAKGSTNHRALTGVIFEPFEEVKKELDLVPTVPQASLARQKYVDESEAAVNEQINVEYNVSYVYHALFAYFDRDNVALRGLAKFFKESSEEEREHAEKLMEYQNRRGGKVKLQSIVMPLSEFDHADKGDALHAMELALSLEKLTNEKLLHLHSVATKNGDVQLADFVESEFLGEQVESIKRISEYVAQLRRVGKGHGVWHFDQMLLHEGGHLA.

A chloroplast-targeting transit peptide spans 1–43 (MLLRTAAASSLSLFNPNAEPSRSVPVLANNASRLVVRAAKGST). The interval 44-76 (NHRALTGVIFEPFEEVKKELDLVPTVPQASLAR) is extension peptide (EP). Residues 77–230 (QKYVDESEAA…EYVAQLRRVG (154 aa)) form the Ferritin-like diiron domain. The Fe cation site is built by Glu-94, Glu-129, His-132, Glu-178, and Gln-212.

This sequence belongs to the ferritin family. As to quaternary structure, oligomer of 24 subunits. There are two types of subunits: L (light) chain and H (heavy) chain. The major chain can be light or heavy, depending on the species and tissue type. The functional molecule forms a roughly spherical shell with a diameter of 12 nm and contains a central cavity into which the insoluble mineral iron core is deposited.

It is found in the plastid. The protein resides in the chloroplast. It carries out the reaction 4 Fe(2+) + O2 + 4 H(+) = 4 Fe(3+) + 2 H2O. In terms of biological role, stores iron in a soluble, non-toxic, readily available form. Important for iron homeostasis. Has ferroxidase activity. Iron is taken up in the ferrous form and deposited as ferric hydroxides after oxidation. This is Ferritin-2, chloroplastic (PFE2) from Vigna unguiculata (Cowpea).